A 356-amino-acid polypeptide reads, in one-letter code: MSGQEKRLMVMAGGTGGHVFPGLAVAHHLMDQGWQVRWLGTADRMEADLVPKNGIEIDFIRISGLRGKGIKAQLLAPVRIFNAWRQARAIMKRFQPDVVLGMGGYVSGPGGLAAWSLGIPVVLHEQNGIAGLTNKWLAKIAKKVMQAFPGAFPHADVVGNPVRTDVLALPLPGQRLVGRQGPIRVLVVGGSQGARVLNQTMPQVAAKLGATVTIWHQSGKGGQQTVQQAYAAAGQPQHKVTEFIDDMAAAYAWADVVVCRSGALTVSEIAAAGLPALFVPFQHKDRQQYWNALPLEKAGAAKILEQPEFTVEAVASTLASWDRETLLDMAERARGASIPDATERVAEEVSAVALAR.

UDP-N-acetyl-alpha-D-glucosamine is bound by residues 15–17 (TGG), Asn127, Arg163, Ser191, Ile244, 263–268 (ALTVSE), and Gln288.

The protein belongs to the glycosyltransferase 28 family. MurG subfamily.

It localises to the cell inner membrane. The enzyme catalyses di-trans,octa-cis-undecaprenyl diphospho-N-acetyl-alpha-D-muramoyl-L-alanyl-D-glutamyl-meso-2,6-diaminopimeloyl-D-alanyl-D-alanine + UDP-N-acetyl-alpha-D-glucosamine = di-trans,octa-cis-undecaprenyl diphospho-[N-acetyl-alpha-D-glucosaminyl-(1-&gt;4)]-N-acetyl-alpha-D-muramoyl-L-alanyl-D-glutamyl-meso-2,6-diaminopimeloyl-D-alanyl-D-alanine + UDP + H(+). The protein operates within cell wall biogenesis; peptidoglycan biosynthesis. Cell wall formation. Catalyzes the transfer of a GlcNAc subunit on undecaprenyl-pyrophosphoryl-MurNAc-pentapeptide (lipid intermediate I) to form undecaprenyl-pyrophosphoryl-MurNAc-(pentapeptide)GlcNAc (lipid intermediate II). This chain is UDP-N-acetylglucosamine--N-acetylmuramyl-(pentapeptide) pyrophosphoryl-undecaprenol N-acetylglucosamine transferase, found in Klebsiella pneumoniae subsp. pneumoniae (strain ATCC 700721 / MGH 78578).